A 291-amino-acid polypeptide reads, in one-letter code: ATP phosphoribosyltransferase 1 (291 aa).

It belongs to the ATP phosphoribosyltransferase family. Long subfamily. Requires Mg(2+) as cofactor.

The protein localises to the cytoplasm. The enzyme catalyses 1-(5-phospho-beta-D-ribosyl)-ATP + diphosphate = 5-phospho-alpha-D-ribose 1-diphosphate + ATP. It participates in amino-acid biosynthesis; L-histidine biosynthesis; L-histidine from 5-phospho-alpha-D-ribose 1-diphosphate: step 1/9. With respect to regulation, feedback inhibited by histidine. Catalyzes the condensation of ATP and 5-phosphoribose 1-diphosphate to form N'-(5'-phosphoribosyl)-ATP (PR-ATP). Has a crucial role in the pathway because the rate of histidine biosynthesis seems to be controlled primarily by regulation of HisG enzymatic activity. This is ATP phosphoribosyltransferase 1 from Geobacter sulfurreducens (strain ATCC 51573 / DSM 12127 / PCA).